The primary structure comprises 1975 residues: Cadherin-87A (1975 aa).

An N-terminal signal peptide occupies residues 1 to 17 (MKLPLGLLMICLGLTLA). The Extracellular segment spans residues 18–1775 (KGETNLPPVF…AIVQDEFDLA (1758 aa)). Cadherin domains lie at 28-132 (TQTL…PPEF), 133-245 (QNTP…PPVF), 246-358 (QGSL…PPVF), 359-472 (NHKE…KPVF), 473-669 (EQES…PPVC), 670-774 (ESPL…VPNF), 775-878 (EQQS…DPYF), 879-998 (VPAT…PPRF), 999-1103 (NAPW…DPKF), 1104-1211 (SQSD…APVF), 1212-1318 (TRDV…KPEF), 1319-1431 (VIPA…RPEF), 1432-1553 (PDAS…PPVF), and 1554-1677 (EKPI…PPEE). N-linked (GlcNAc...) asparagine glycans are attached at residues Asn39, Asn77, and Asn203. Asn424 carries N-linked (GlcNAc...) asparagine glycosylation. Positions 535 to 560 (CHDNGESNRRERRDLNEDEHVEEDDG) are disordered. Residues 537-549 (DNGESNRRERRDL) show a composition bias toward basic and acidic residues. Acidic residues predominate over residues 550–560 (NEDEHVEEDDG). Asn730 and Asn761 each carry an N-linked (GlcNAc...) asparagine glycan. Asn1039, Asn1049, Asn1111, Asn1163, Asn1217, Asn1325, Asn1349, Asn1492, Asn1576, and Asn1691 each carry an N-linked (GlcNAc...) asparagine glycan. A helical transmembrane segment spans residues 1776–1796 (VAGLVALVIVLFVGVISFIVL). The Cytoplasmic segment spans residues 1797–1975 (CCCLKHWNLS…DGDDAVAELI (179 aa)). The span at 1887–1899 (YATIQPRNNQNRL) shows a compositional bias: polar residues. The interval 1887–1916 (YATIQPRNNQNRLTGGGGAGGGSMRSGGGA) is disordered. Gly residues predominate over residues 1900 to 1916 (TGGGGAGGGSMRSGGGA).

The protein resides in the cell membrane. Its function is as follows. Cadherins are calcium-dependent cell adhesion proteins. They preferentially interact with themselves in a homophilic manner in connecting cells. The sequence is that of Cadherin-87A (Cad87A) from Drosophila melanogaster (Fruit fly).